A 154-amino-acid polypeptide reads, in one-letter code: Cathelicidin-2 (154 aa).

Residues 1–17 (MLSCWVLLLALLGGVCA) form the signal peptide. Positions 18 to 122 (LPAPLSYPQA…RCRDASSDPV (105 aa)) are excised as a propeptide. 2 disulfides stabilise this stretch: cysteine 75–cysteine 86 and cysteine 97–cysteine 114.

This sequence belongs to the cathelicidin family. In terms of tissue distribution, detected in trachea, lung, proventriculus, duodenum, jejunum, ileum, caeca, colon, caecal tonsil, bursa of Fabricius, kidney, ovary, testis, thymus, liver, spleen, bone marrow, skin, uropygial gland, muscle and brain.

It is found in the secreted. In terms of biological role, binds bacterial lipopolysaccharide (LPS). Has potent antimicrobial activity against Gram-positive and Gram-negative bacteria (in vitro). Has hemolytic activity (in vitro). May play a role in the innate immune response. This is Cathelicidin-2 (CATHL2) from Gallus gallus (Chicken).